A 163-amino-acid chain; its full sequence is Protein-export protein SecB (163 aa).

The protein belongs to the SecB family. As to quaternary structure, homotetramer, a dimer of dimers. One homotetramer interacts with 1 SecA dimer.

The protein resides in the cytoplasm. Its function is as follows. One of the proteins required for the normal export of preproteins out of the cell cytoplasm. It is a molecular chaperone that binds to a subset of precursor proteins, maintaining them in a translocation-competent state. It also specifically binds to its receptor SecA. This Brucella abortus (strain S19) protein is Protein-export protein SecB.